The chain runs to 220 residues: HTH-type transcriptional repressor KstR (220 aa).

Positions 36-96 (RERRKRILDA…SALGREFSRI (61 aa)) constitute an HTH tetR-type domain. The H-T-H motif DNA-binding region spans 59-78 (QMRAVADRADVAVGTLYRYF).

As to quaternary structure, homodimer.

In terms of biological role, controls the expression of genes used for utilizing diverse lipids as energy sources. The chain is HTH-type transcriptional repressor KstR (kstR) from Mycobacterium tuberculosis (strain ATCC 25618 / H37Rv).